A 139-amino-acid chain; its full sequence is Mitochondrial intermembrane space import and assembly protein 40 (139 aa).

Cystine bridges form between cysteine 53-cysteine 55, cysteine 64-cysteine 97, and cysteine 74-cysteine 87. The 45-residue stretch at 61-105 (SGPCGEQFKSAFSCFHYSTEDIKGSDCIDQFRAMQECMQKYPDLY) folds into the CHCH domain. Short sequence motifs (cx9C motif) lie at residues 64–74 (CGEQFKSAFSC) and 87–97 (CIDQFRAMQEC). The disordered stretch occupies residues 104–139 (LYPQDEEEEEEAKPVEPVEETADTKASAAKEQGASS). The segment covering 106–124 (PQDEEEEEEAKPVEPVEET) has biased composition (acidic residues).

As to quaternary structure, monomer. Can form homooligomers. Interacts with GFER and forms transient disulfide bonds with GFER. Interacts with MICU1. Interacts with COX19 forming transient intermolecular disulfide bridges. Interacts with COA7 through transient intermolecular disulfide bonds. Interacts with AIFM1; the interaction increases in presence of NADH. Interacts with NDUFB10. In terms of processing, forms intrachain disulfide bridges, but exists in different redox states.

It localises to the mitochondrion intermembrane space. In terms of biological role, central component of a redox-sensitive mitochondrial intermembrane space import machinery which is required for the biogenesis of respiratory chain complexes. Functions as a chaperone and catalyzes the formation of disulfide bonds in substrate proteins, such as COX17, COX19, MICU1 and COA7. Required for the import and folding of small cysteine-containing proteins (small Tim) in the mitochondrial intermembrane space (IMS). Required for the import of COA7 in the IMS. Precursor proteins to be imported into the IMS are translocated in their reduced form into the mitochondria. The oxidized form of CHCHD4/MIA40 forms a transient intermolecular disulfide bridge with the reduced precursor protein, resulting in oxidation of the precursor protein that now contains an intramolecular disulfide bond and is able to undergo folding in the IMS. Reduced CHCHD4/MIA40 is then reoxidized by GFER/ERV1 via a disulfide relay system. Mediates formation of disulfide bond in MICU1 in the IMS, promoting formation of the MICU1-MICU2 heterodimer that regulates mitochondrial calcium uptake. The polypeptide is Mitochondrial intermembrane space import and assembly protein 40 (Chchd4) (Rattus norvegicus (Rat)).